Here is a 262-residue protein sequence, read N- to C-terminus: Hydroxyethylthiazole kinase (262 aa).

Met50 is a substrate binding site. Residues Arg125 and Thr171 each contribute to the ATP site. Substrate is bound at residue Gly198.

Belongs to the Thz kinase family. Requires Mg(2+) as cofactor.

It catalyses the reaction 5-(2-hydroxyethyl)-4-methylthiazole + ATP = 4-methyl-5-(2-phosphooxyethyl)-thiazole + ADP + H(+). It participates in cofactor biosynthesis; thiamine diphosphate biosynthesis; 4-methyl-5-(2-phosphoethyl)-thiazole from 5-(2-hydroxyethyl)-4-methylthiazole: step 1/1. Catalyzes the phosphorylation of the hydroxyl group of 4-methyl-5-beta-hydroxyethylthiazole (THZ). This chain is Hydroxyethylthiazole kinase, found in Citrobacter koseri (strain ATCC BAA-895 / CDC 4225-83 / SGSC4696).